The following is a 181-amino-acid chain: uncharacterized protein (181 aa).

This is an uncharacterized protein from Methanocaldococcus jannaschii (strain ATCC 43067 / DSM 2661 / JAL-1 / JCM 10045 / NBRC 100440) (Methanococcus jannaschii).